The chain runs to 119 residues: Ribonuclease P protein component (119 aa).

This sequence belongs to the RnpA family. In terms of assembly, consists of a catalytic RNA component (M1 or rnpB) and a protein subunit.

It catalyses the reaction Endonucleolytic cleavage of RNA, removing 5'-extranucleotides from tRNA precursor.. In terms of biological role, RNaseP catalyzes the removal of the 5'-leader sequence from pre-tRNA to produce the mature 5'-terminus. It can also cleave other RNA substrates such as 4.5S RNA. The protein component plays an auxiliary but essential role in vivo by binding to the 5'-leader sequence and broadening the substrate specificity of the ribozyme. This is Ribonuclease P protein component from Bifidobacterium longum (strain DJO10A).